A 636-amino-acid chain; its full sequence is Molybdenum cofactor biosynthesis protein 1 (636 aa).

The segment at 1–383 is molybdenum cofactor biosynthesis protein A; it reads MAARPLSRML…QMKNRPMILI (383 aa). Serine 64 is subject to Phosphoserine. A Radical SAM core domain is found at 64–277; it reads SFGRQHSYLR…LDTVRQQWPE (214 aa). Arginine 73 contributes to the GTP binding site. Positions 80 and 84 each coordinate [4Fe-4S] cluster. Tyrosine 86 provides a ligand contact to S-adenosyl-L-methionine. Residue cysteine 87 coordinates [4Fe-4S] cluster. A GTP-binding site is contributed by arginine 123. Glycine 127 lines the S-adenosyl-L-methionine pocket. Threonine 154 is a binding site for GTP. S-adenosyl-L-methionine is bound at residue serine 178. Residue lysine 198 is modified to N6-acetyllysine. Residue lysine 215 participates in GTP binding. Methionine 249 lines the S-adenosyl-L-methionine pocket. [4Fe-4S] cluster-binding residues include cysteine 312 and cysteine 315. A GTP-binding site is contributed by 317–319; that stretch reads RLR. Position 329 (cysteine 329) interacts with [4Fe-4S] cluster. Positions 414-636 are molybdenum cofactor biosynthesis protein C; it reads MSFSSQVATL…GGQRGDFHRA (223 aa). The disordered stretch occupies residues 456 to 480; it reads DANSKCLSPGSWASAAPSGPQLTSE. Residues 463-475 show a composition bias toward low complexity; sequence SPGSWASAAPSGP. Lysine 528 carries the N6-acetyllysine modification. Aspartate 606 (for molybdenum cofactor biosynthesis protein C activity) is an active-site residue.

The protein in the C-terminal section; belongs to the MoaC family. It in the N-terminal section; belongs to the radical SAM superfamily. MoaA family. In terms of assembly, isoform MOCS1A and isoform MOCS1B probably form a heterooligomer. [4Fe-4S] cluster is required as a cofactor. As to expression, isoform MOCS1A and isoform 2 are widely expressed.

It carries out the reaction GTP + AH2 + S-adenosyl-L-methionine = (8S)-3',8-cyclo-7,8-dihydroguanosine 5'-triphosphate + 5'-deoxyadenosine + L-methionine + A + H(+). The enzyme catalyses (8S)-3',8-cyclo-7,8-dihydroguanosine 5'-triphosphate = cyclic pyranopterin phosphate + diphosphate. It functions in the pathway cofactor biosynthesis; molybdopterin biosynthesis. In terms of biological role, isoform MOCS1A and isoform MOCS1B probably form a complex that catalyzes the conversion of 5'-GTP to cyclic pyranopterin monophosphate (cPMP). MOCS1A catalyzes the cyclization of GTP to (8S)-3',8-cyclo-7,8-dihydroguanosine 5'-triphosphate and MOCS1B catalyzes the subsequent conversion of (8S)-3',8-cyclo-7,8-dihydroguanosine 5'-triphosphate to cPMP. This chain is Molybdenum cofactor biosynthesis protein 1 (MOCS1), found in Homo sapiens (Human).